The chain runs to 283 residues: Pre-protein-C8 (283 aa).

The segment at residues 1–40 (MKEDNNTSEESGRINRRNVLKTVGAAGLFAAGSTGMAAAA) is a signal peptide (tat-type signal). Positions 61-75 (ARELAKTPAFRELAQ) are helix-loop-helix (HLH) region.

Immunity protein HalI interacts with Halocin-C8; the interaction is direct. Post-translationally, predicted to be exported by the Tat system. The position of the signal peptide cleavage has not been experimentally proven.

Its subcellular location is the secreted. It localises to the cell membrane. Functionally, has antibacterial activity against a wide variety of haloarchaeons. Causes cell lysis and death, possibly by disrupting the cell wall. In terms of biological role, acts as an immunity protein for halocin-C8. Able to block the halocin-C8 activity by sequestering the activity of halocin-C8 through specific and direct binding. This is Pre-protein-C8 (proC8) from Halobacterium sp. (strain AS7092).